Reading from the N-terminus, the 1700-residue chain is Leucine-rich repeat-containing protein 37A2 (1700 aa).

An N-terminal signal peptide occupies residues 1–35 (MSSAQCPALVCVMSRLRFWGPWPLLMWQLLWLLVK). Residues 36–1582 (EAQPLEWVKD…VPGYGYTDKL (1547 aa)) are Extracellular-facing. Residues 54-65 (LGPPDSWSSHSS) show a composition bias toward polar residues. 6 disordered regions span residues 54-104 (LGPP…ESTE), 130-156 (QQDLKDKLSPQERLPVSPKKLKKDPAQ), 169-534 (QLST…AQPP), 559-580 (TEVELSPTMKETPTQPPKKVVP), 619-642 (PEPTTEVGHSTPPKRTIVSPKHPE), and 729-752 (TKPTTEVKPSPTTEETSTQPPDLG). One copy of the LRR 1 repeat lies at 137-160 (LSPQERLPVSPKKLKKDPAQRWSL). Composition is skewed to polar residues over residues 169-189 (QLSTPQSQKQTLQNEYSSTDT) and 223-237 (ETQNPETLEDIQSSS). LRR repeat units lie at residues 230–253 (LEDIQSSSLQQEAPAQLPQLLEEE) and 267–290 (ESSMESLTLPNHEVSVQPPGEDQA). Low complexity predominate over residues 238 to 249 (LQQEAPAQLPQL). The N-linked (GlcNAc...) asparagine glycan is linked to N296. Positions 307 to 326 (TITSEPTNETESSQAQQETP) are enriched in polar residues. Over residues 358 to 368 (SEQQQPVQPSE) the composition is skewed to low complexity. Residues 433-446 (LVHQEATTRLSGSG) are compositionally biased toward polar residues. Over residues 482–493 (SPEPINNENPSP) the composition is skewed to low complexity. Residues 729 to 749 (TKPTTEVKPSPTTEETSTQPP) are compositionally biased toward low complexity. LRR repeat units follow at residues 864–887 (NGTFTILNFQGNYISYIDGNVWKA), 888–911 (YSWTEKLILRENNLTELHKDSFEG), 912–935 (LLSLQYLDLSCNKIQSIERHTFEP), 937–959 (PFLKFINLSCNVITELSFGTFQA), 963–987 (MQFLHKLILNHNPLTTVEDPYLFKL), and 1002–1027 (LTTLKNILMMTVELEKLILPSHMACC). N1079 is a glycosylation site (N-linked (GlcNAc...) asparagine). An LRR 10 repeat occupies 1124 to 1146 (LPYFSAVNLDVKSLLLPFIKLPT). 2 stretches are compositionally biased toward basic and acidic residues: residues 1182 to 1191 (VGRQSIRREQ) and 1201 to 1216 (AEEKRLGSPAPREVEQ). Disordered regions lie at residues 1182 to 1227 (VGRQ…EKLA) and 1309 to 1328 (KTRSHVTHRTPKVKKSPKVR). Residues 1583-1603 (ILALIVTGILTILIILFCLIV) traverse the membrane as a helical segment. The Cytoplasmic segment spans residues 1604–1700 (ICCHRRSLQE…TEEEESEALP (97 aa)). The span at 1675 to 1685 (NEDKILNRDPG) shows a compositional bias: basic and acidic residues. The segment at 1675–1700 (NEDKILNRDPGDSEAPTEEEESEALP) is disordered. Residues 1689–1700 (APTEEEESEALP) are compositionally biased toward acidic residues.

This sequence belongs to the LRRC37A family.

It is found in the membrane. The polypeptide is Leucine-rich repeat-containing protein 37A2 (LRRC37A2) (Homo sapiens (Human)).